Here is a 346-residue protein sequence, read N- to C-terminus: KH domain-containing, RNA-binding, signal transduction-associated protein 3 (346 aa).

Positions 1–160 are involved in homodimerization; it reads MEEKYLPELM…IKKFLIPDYN (160 aa). A Glycyl lysine isopeptide (Lys-Gly) (interchain with G-Cter in SUMO2) cross-link involves residue K4. Positions 61–127 constitute a KH domain; that stretch reads LIPVKQFPKF…AKYFHLNDDL (67 aa). 2 disordered regions span residues 212–266 and 317–346; these read RPVA…QETY and GQEEWTNSRHKAPSARTAKGVYRDQPYGRY. The span at 253 to 262 shows a compositional bias: pro residues; that stretch reads GYRPPPPPPT.

This sequence belongs to the KHDRBS family. In terms of assembly, self-associates to form homooligomers; dimerization increases RNA affinity. Interacts with KHDRBS2/SLM-1. Interacts with KHDRBS1/SAM68; heterooligomer formation of KHDRBS family proteins may modulate RNA substrate specificity. Interacts with the splicing regulatory proteins SFRS9, SAFB and YTHDC1. Interacts with HNRPL, RBMX, p85 subunit of PI3-kinase, SERPINB5. Phosphorylated on tyrosine residues by PTK6. In terms of tissue distribution, highly expressed in testis and brain. In adult cerebellum expressed predominantly in internal granular layer interneurons and in hippocampus is exclusively expressed in CA neurons; expression is restricted to neuronal subpopulations largely non-overlapping with expression of KHDRBS2/SLM-1.

The protein resides in the nucleus. RNA-binding protein that plays a role in the regulation of alternative splicing and influences mRNA splice site selection and exon inclusion. Binds preferentially to the 5'-[AU]UAAA-3' motif in vitro. Binds optimally to RNA containing 5'-[AU]UAA-3' as a bipartite motif spaced by more than 15 nucleotides. Binds poly(A). RNA-binding abilities are down-regulated by tyrosine kinase PTK6. Involved in splice site selection of vascular endothelial growth factor. In vitro regulates CD44 alternative splicing by direct binding to purine-rich exonic enhancer. Can regulate alternative splicing of neurexins NRXN1-3 in the laminin G-like domain 6 containing the evolutionary conserved neurexin alternative spliced segment 4 (AS4) involved in neurexin selective targeting to postsynaptic partners such as neuroligins and LRRTM family members. High concentrations in forebrain structures block splicing inclusion of NRXN1-3 AS4 exons while low concentrations favor their inclusion. Targeted, cell-type specific splicing regulation of NRXN1 at AS4 is involved in neuronal glutamatergic synapse function and plasticity and is linked to behavioral aspects. Regulates expression of KHDRBS2/SLIM-1 in defined neuron populations in the hippocampus by modifying its alternative splicing resulting in a transcript predicted to undergo nonsense-mediated decay. Can bind FABP9 mRNA. May play a role as a negative regulator of cell growth. Inhibits cell proliferation. The chain is KH domain-containing, RNA-binding, signal transduction-associated protein 3 (Khdrbs3) from Mus musculus (Mouse).